The sequence spans 480 residues: MTLSFTTHWRDELPDFYTSLLPTPLDNARLIWRNAPLAQQLGVPDALFAPENGAGVWGGEALLPGMSPLAQVYSGHQFGAWAGQLGDGRGILLGEQQLADGRRYDWHLKGAGLTPYSRMGDGRAVLRSTIRESLASEAMHALGIPTTRALAMVTSDTPIYRERVEPGAMLMRVAESHVRFGHFEHFYYRREPQKVQQLADYVIRHHWPQLQDEADKYLLWFRDVVTRTAQTIASWQTVGFAHGVMNTDNMSILGLTIDYGPYGFLDDFQPDFICNHSDYQGRYSFENQPAVGLWNLQRLAQSLSPFISAEALNAALDEYQHALLTAYGQRMRDKLGLFSQQKGDNDLLDGLFALMIREKSDYTRTFRLLSHSEQLSAASPLRDEFIDRAAFDSWFAGYRARLRDEQVDDAQRQQRMQGVNPALVLRNWLAQRAIEQAEAGDMGELERLHAALADPFTDREDDYVRRPPDWGKRLEVSCSS.

8 residues coordinate ATP: glycine 86, glycine 88, arginine 89, lysine 109, aspartate 121, glycine 122, arginine 172, and arginine 179. Aspartate 248 (proton acceptor) is an active-site residue. The Mg(2+) site is built by asparagine 249 and aspartate 258. ATP is bound at residue aspartate 258.

It belongs to the SELO family. Requires Mg(2+) as cofactor. The cofactor is Mn(2+).

It catalyses the reaction L-seryl-[protein] + ATP = 3-O-(5'-adenylyl)-L-seryl-[protein] + diphosphate. The catalysed reaction is L-threonyl-[protein] + ATP = 3-O-(5'-adenylyl)-L-threonyl-[protein] + diphosphate. It carries out the reaction L-tyrosyl-[protein] + ATP = O-(5'-adenylyl)-L-tyrosyl-[protein] + diphosphate. The enzyme catalyses L-histidyl-[protein] + UTP = N(tele)-(5'-uridylyl)-L-histidyl-[protein] + diphosphate. It catalyses the reaction L-seryl-[protein] + UTP = O-(5'-uridylyl)-L-seryl-[protein] + diphosphate. The catalysed reaction is L-tyrosyl-[protein] + UTP = O-(5'-uridylyl)-L-tyrosyl-[protein] + diphosphate. Nucleotidyltransferase involved in the post-translational modification of proteins. It can catalyze the addition of adenosine monophosphate (AMP) or uridine monophosphate (UMP) to a protein, resulting in modifications known as AMPylation and UMPylation. This chain is Protein nucleotidyltransferase YdiU, found in Klebsiella pneumoniae (strain 342).